The primary structure comprises 32 residues: Cathepsin B-like cysteine proteinase (32 aa).

The propeptide at 1 to 22 (KPNYKRQFEPFSDELIHYINLE) is activation peptide.

It belongs to the peptidase C1 family.

Functionally, thiol protease. The protein is Cathepsin B-like cysteine proteinase of Fasciola hepatica (Liver fluke).